Reading from the N-terminus, the 185-residue chain is Large ribosomal subunit protein bL25 (185 aa).

The protein belongs to the bacterial ribosomal protein bL25 family. CTC subfamily. As to quaternary structure, part of the 50S ribosomal subunit; part of the 5S rRNA/L5/L18/L25 subcomplex. Contacts the 5S rRNA. Binds to the 5S rRNA independently of L5 and L18.

In terms of biological role, this is one of the proteins that binds to the 5S RNA in the ribosome where it forms part of the central protuberance. This chain is Large ribosomal subunit protein bL25, found in Chlamydia trachomatis serovar D (strain ATCC VR-885 / DSM 19411 / UW-3/Cx).